A 456-amino-acid chain; its full sequence is 3-isopropylmalate dehydratase large subunit (456 aa).

3 residues coordinate [4Fe-4S] cluster: Cys336, Cys396, and Cys399.

It belongs to the aconitase/IPM isomerase family. LeuC type 1 subfamily. As to quaternary structure, heterodimer of LeuC and LeuD. It depends on [4Fe-4S] cluster as a cofactor.

The enzyme catalyses (2R,3S)-3-isopropylmalate = (2S)-2-isopropylmalate. The protein operates within amino-acid biosynthesis; L-leucine biosynthesis; L-leucine from 3-methyl-2-oxobutanoate: step 2/4. Functionally, catalyzes the isomerization between 2-isopropylmalate and 3-isopropylmalate, via the formation of 2-isopropylmaleate. In Staphylococcus epidermidis (strain ATCC 35984 / DSM 28319 / BCRC 17069 / CCUG 31568 / BM 3577 / RP62A), this protein is 3-isopropylmalate dehydratase large subunit.